Reading from the N-terminus, the 264-residue chain is Hydroxyethylthiazole kinase (264 aa).

Met43 serves as a coordination point for substrate. The ATP site is built by Arg119 and Thr165. Gly192 provides a ligand contact to substrate.

The protein belongs to the Thz kinase family. It depends on Mg(2+) as a cofactor.

The enzyme catalyses 5-(2-hydroxyethyl)-4-methylthiazole + ATP = 4-methyl-5-(2-phosphooxyethyl)-thiazole + ADP + H(+). It functions in the pathway cofactor biosynthesis; thiamine diphosphate biosynthesis; 4-methyl-5-(2-phosphoethyl)-thiazole from 5-(2-hydroxyethyl)-4-methylthiazole: step 1/1. Catalyzes the phosphorylation of the hydroxyl group of 4-methyl-5-beta-hydroxyethylthiazole (THZ). The protein is Hydroxyethylthiazole kinase of Anoxybacillus flavithermus (strain DSM 21510 / WK1).